The sequence spans 1443 residues: Sterol 3-beta-glucosyltransferase ATG26 (1443 aa).

The segment covering 1–13 has biased composition (low complexity); that stretch reads MATQADDAAASQA. Disordered stretches follow at residues 1-69 and 88-187; these read MATQ…MFMN and NDRF…LTLT. Basic and acidic residues predominate over residues 18-32; the sequence is GDLKEHVHDELDKIQ. Over residues 49–58 the composition is skewed to acidic residues; sequence DSEDSDDEDN. Residues 104–117 are compositionally biased toward polar residues; that stretch reads QNTRTESIARTSIL. Over residues 125–134 the composition is skewed to basic residues; it reads DKVHRRRKLS. The span at 164 to 173 shows a compositional bias: acidic residues; that stretch reads EVADEADDEH. The 45-residue stretch at 240–284 folds into the GRAM 1 domain; sequence LKEIFEFDEYEQVIEEYPCWLLQSVLLQGYMYITSKHICFYAYLP. The region spanning 289–385 is the PH domain; that stretch reads EAVKSGYLSK…WVKSLQRVIF (97 aa). Positions 463–657 are disordered; that stretch reads EQVITGDDHD…HGDRHHGIPH (195 aa). Low complexity predominate over residues 506-525; it reads LAPMSPLSPRSPSQLSPRAS. The span at 585–614 shows a compositional bias: polar residues; that stretch reads SFLQSSIENPSISTLSPSSYDEPSASQILQ. Residues 631 to 642 are compositionally biased toward basic residues; the sequence is SRKRDRSGKRTP. Residues 765–870 enclose the GRAM 2 domain; the sequence is RFRAHFALPE…DCAVTLHQLM (106 aa). Residues 883 to 910 adopt a coiled-coil conformation; that stretch reads DQEEQDDEEAAAAMAERDELQEARQDEF. UDP-alpha-D-glucose is bound by residues Ser-957, Arg-958, Asp-960, Ala-1265, His-1267, His-1280, Ser-1283, Gly-1284, Thr-1285, Asp-1304, and Gln-1305. The tract at residues 1385–1443 is disordered; the sequence is NAEHGLAEDDDDTEESWTFVGRDEPDPDAVTKKLSDGLAGLGAAGDRPPPLGSQAPTVA. A compositionally biased stretch (basic and acidic residues) spans 1405 to 1419; sequence GRDEPDPDAVTKKLS.

The protein belongs to the glycosyltransferase 28 family.

It localises to the cytoplasm. Its subcellular location is the preautophagosomal structure membrane. The enzyme catalyses a sterol + UDP-alpha-D-glucose = a sterol 3-beta-D-glucoside + UDP + H(+). It catalyses the reaction ergosterol + UDP-alpha-D-glucose = ergosteryl 3-beta-D-glucoside + UDP + H(+). Functionally, sterol glycosyltransferase responsible for the glycosylation of ergosterol to form ergosterol-glucoside. In Gibberella zeae (strain ATCC MYA-4620 / CBS 123657 / FGSC 9075 / NRRL 31084 / PH-1) (Wheat head blight fungus), this protein is Sterol 3-beta-glucosyltransferase ATG26.